Here is a 340-residue protein sequence, read N- to C-terminus: Heat-inducible transcription repressor HrcA (340 aa).

It belongs to the HrcA family.

In terms of biological role, negative regulator of class I heat shock genes (grpE-dnaK-dnaJ and groELS operons). Prevents heat-shock induction of these operons. The polypeptide is Heat-inducible transcription repressor HrcA (Mycoplasma capricolum subsp. capricolum (strain California kid / ATCC 27343 / NCTC 10154)).